A 224-amino-acid chain; its full sequence is Peptidyl-prolyl cis-trans isomerase CYP21-1 (224 aa).

The first 27 residues, 1 to 27, serve as a signal peptide directing secretion; that stretch reads MRREISFLLQPRCLLLLVALTIFLVFA. The region spanning 50–214 is the PPIase cyclophilin-type domain; it reads FLDVDIDGQR…KKVVIADSGE (165 aa). Residue asparagine 158 is glycosylated (N-linked (GlcNAc...) asparagine).

The protein belongs to the cyclophilin-type PPIase family. Ubiquitous.

The protein resides in the endoplasmic reticulum. It carries out the reaction [protein]-peptidylproline (omega=180) = [protein]-peptidylproline (omega=0). Functionally, PPIases accelerate the folding of proteins. It catalyzes the cis-trans isomerization of proline imidic peptide bonds in oligopeptides. This chain is Peptidyl-prolyl cis-trans isomerase CYP21-1 (CYP21-1), found in Arabidopsis thaliana (Mouse-ear cress).